A 116-amino-acid chain; its full sequence is uncharacterized protein (116 aa).

A helical transmembrane segment spans residues 5-23 (LLAVETWYMLILSFRFLFF).

The protein resides in the membrane. This is an uncharacterized protein from Saccharomyces cerevisiae (strain ATCC 204508 / S288c) (Baker's yeast).